Reading from the N-terminus, the 1221-residue chain is Putative DNA-directed RNA polymerase II subunit RPB2 homolog (1221 aa).

Low complexity-rich tracts occupy residues methionine 1–serine 54 and proline 692–serine 701. 2 disordered regions span residues methionine 1–glutamate 63 and arginine 673–serine 701. Aspartate 823 provides a ligand contact to Mg(2+). Zn(2+)-binding residues include cysteine 1174, cysteine 1177, cysteine 1187, and cysteine 1190. The C4-type zinc finger occupies cysteine 1174–cysteine 1190.

This sequence belongs to the RNA polymerase beta chain family.

The catalysed reaction is RNA(n) + a ribonucleoside 5'-triphosphate = RNA(n+1) + diphosphate. Its function is as follows. Component of the DNA-dependent RNA polymerase that catalyzes the transcription of DNA into RNA using the four ribonucleoside triphosphates as substrates. Second largest component of RNA polymerase II which synthesizes mRNA precursors and many functional non-coding RNAs. Proposed to contribute to the polymerase catalytic activity and forms the polymerase active center together with the largest subunit. This chain is Putative DNA-directed RNA polymerase II subunit RPB2 homolog, found in Dryophytes versicolor (chameleon treefrog).